A 1397-amino-acid polypeptide reads, in one-letter code: ABC transporter G family member 41 (1397 aa).

In terms of domain architecture, ABC transporter 1 spans 138 to 411 (SLSKFVCSKK…FEGCGFKCPE (274 aa)). 171–178 (GPPGCGKT) is a binding site for ATP. One can recognise an ABC transmembrane type-2 1 domain in the interval 489-701 (EMLKACSRRE…AEIGLTANEF (213 aa)). 6 consecutive transmembrane segments (helical) span residues 507–527 (FIYL…MTVF), 549–570 (ALFR…RLGV), 594–614 (IPLS…VIGY), 625–645 (FIIL…IASI), 651–671 (ACSI…GFVI), and 735–755 (TAFG…TLAL). The ABC transporter 2 domain maps to 805–1050 (VTFQNVQYYI…VIKYFESIPG (246 aa)). 842–849 (GVSGAGKT) is a binding site for ATP. Residues 1122–1336 (GQLKACLWKQ…VLEGLLSSQY (215 aa)) form the ABC transmembrane type-2 2 domain. 7 helical membrane-spanning segments follow: residues 1141–1161 (HNLT…LLFW), 1173–1193 (LFSI…NNCA), 1229–1249 (VPYS…MIGY), 1260–1280 (LYSI…MVAL), 1286–1306 (MALT…GFVM), 1314–1334 (WWIW…LLSS), and 1369–1389 (VVAF…AFFM).

Belongs to the ABC transporter superfamily. ABCG family. PDR (TC 3.A.1.205) subfamily. As to expression, confined to roots.

Its subcellular location is the membrane. May be a general defense protein. The protein is ABC transporter G family member 41 (ABCG41) of Arabidopsis thaliana (Mouse-ear cress).